A 188-amino-acid chain; its full sequence is Putative manganese efflux pump MntP (188 aa).

6 helical membrane passes run 3-23, 41-61, 66-86, 107-129, 143-163, and 168-188; these read ITATVLLAFGMSMDAFAASIG, LIFGAVETLTPLIGWGLGMLA, LEWNHWVAFILLVFLGIRMII, LLVTTAIATSLDAMAVGVGLAFL, ATLIMSTLGIMVGRFIGPLLG, and ILGGAVLIGIGAQILWTHFHG.

This sequence belongs to the MntP (TC 9.B.29) family.

It is found in the cell inner membrane. Probably functions as a manganese efflux pump. The sequence is that of Putative manganese efflux pump MntP from Citrobacter koseri (strain ATCC BAA-895 / CDC 4225-83 / SGSC4696).